A 587-amino-acid chain; its full sequence is Pyruvate decarboxylase 3 (587 aa).

Substrate is bound by residues D48 and H135. The segment at 415 to 496 is thiamine pyrophosphate binding; that stretch reads DSWFNCQKLR…FLINNGGYTI (82 aa). Mg(2+)-binding residues include D464, N491, and G493. E497 contributes to the substrate binding site.

This sequence belongs to the TPP enzyme family. In terms of assembly, homotetramer. It depends on a metal cation as a cofactor. Thiamine diphosphate serves as cofactor.

The catalysed reaction is a 2-oxocarboxylate + H(+) = an aldehyde + CO2. In Oryza sativa subsp. japonica (Rice), this protein is Pyruvate decarboxylase 3 (PDC3).